Consider the following 73-residue polypeptide: Large ribosomal subunit protein bL31 (73 aa).

Zn(2+) is bound by residues Cys-16, Cys-18, Cys-37, and Cys-40.

This sequence belongs to the bacterial ribosomal protein bL31 family. Type A subfamily. In terms of assembly, part of the 50S ribosomal subunit. Zn(2+) is required as a cofactor.

Binds the 23S rRNA. This chain is Large ribosomal subunit protein bL31, found in Blochmanniella floridana.